Consider the following 123-residue polypeptide: Small ribosomal subunit protein uS12 (123 aa).

3-methylthioaspartic acid is present on Asp89. The disordered stretch occupies residues 102 to 123 (LDTSGVQDRRQRRSKYGAKRPK). Residues 111 to 123 (RQRRSKYGAKRPK) show a composition bias toward basic residues.

It belongs to the universal ribosomal protein uS12 family. Part of the 30S ribosomal subunit. Contacts proteins S8 and S17. May interact with IF1 in the 30S initiation complex.

Functionally, with S4 and S5 plays an important role in translational accuracy. In terms of biological role, interacts with and stabilizes bases of the 16S rRNA that are involved in tRNA selection in the A site and with the mRNA backbone. Located at the interface of the 30S and 50S subunits, it traverses the body of the 30S subunit contacting proteins on the other side and probably holding the rRNA structure together. The combined cluster of proteins S8, S12 and S17 appears to hold together the shoulder and platform of the 30S subunit. This is Small ribosomal subunit protein uS12 from Lawsonia intracellularis (strain PHE/MN1-00).